Here is a 152-residue protein sequence, read N- to C-terminus: MSLVIPEKFQHILRVMNTNIDGRRKIMFALTSIKGVGRRYSNIVCKKADIDLSKRAGELSDEEVERLITIMQNPRQYKIPDWFLNRQKDVKDGKYSQVMANSLDNKLREDLERLKKIRAHRGLRHYWGLRVRGQHTKTTGRRGRTVGVSKKK.

Belongs to the universal ribosomal protein uS13 family.

The protein resides in the cytoplasm. Located at the top of the head of the 40S subunit, it contacts several helices of the 18S rRNA. The sequence is that of Small ribosomal subunit protein uS13 (RPS18) from Branchiostoma belcheri (Amphioxus).